The following is a 187-amino-acid chain: Meiotically up-regulated gene 155 protein (187 aa).

Positions Met-1–Asp-24 are disordered. The next 2 helical transmembrane spans lie at Ile-83 to His-105 and Val-163 to Phe-183.

The protein localises to the cytoplasm. The protein resides in the nucleus membrane. Has a role in meiosis. The sequence is that of Meiotically up-regulated gene 155 protein (mug155) from Schizosaccharomyces pombe (strain 972 / ATCC 24843) (Fission yeast).